Consider the following 203-residue polypeptide: DNA-directed RNA polymerase subunit gamma (203 aa).

The Zn(2+) site is built by C34, C36, C49, and C52.

It belongs to the RNA polymerase beta' chain family. RpoC1 subfamily. In cyanobacteria the RNAP catalytic core is composed of 2 alpha, 1 beta, 1 beta', 1 gamma and 1 omega subunit. When a sigma factor is associated with the core the holoenzyme is formed, which can initiate transcription. It depends on Zn(2+) as a cofactor.

The catalysed reaction is RNA(n) + a ribonucleoside 5'-triphosphate = RNA(n+1) + diphosphate. Functionally, DNA-dependent RNA polymerase catalyzes the transcription of DNA into RNA using the four ribonucleoside triphosphates as substrates. This is DNA-directed RNA polymerase subunit gamma (rpoC1) from Prochlorothrix hollandica.